The following is a 290-amino-acid chain: 4-hydroxybenzoate octaprenyltransferase (290 aa).

Helical transmembrane passes span 24-44 (IGFF…HKGI), 48-68 (VVLI…CIIN), 98-118 (LVAL…LNFI), 142-162 (FPQV…FTAI), 171-191 (WLLF…YAMI), 214-234 (FLIG…GWKE), 239-259 (VFYF…QILI), and 270-290 (AFLS…SSFH).

Belongs to the UbiA prenyltransferase family. It depends on Mg(2+) as a cofactor.

Its subcellular location is the cell inner membrane. The enzyme catalyses all-trans-octaprenyl diphosphate + 4-hydroxybenzoate = 4-hydroxy-3-(all-trans-octaprenyl)benzoate + diphosphate. Its pathway is cofactor biosynthesis; ubiquinone biosynthesis. Its function is as follows. Catalyzes the prenylation of para-hydroxybenzoate (PHB) with an all-trans polyprenyl group. Mediates the second step in the final reaction sequence of ubiquinone-8 (UQ-8) biosynthesis, which is the condensation of the polyisoprenoid side chain with PHB, generating the first membrane-bound Q intermediate 3-octaprenyl-4-hydroxybenzoate. This chain is 4-hydroxybenzoate octaprenyltransferase, found in Blochmanniella pennsylvanica (strain BPEN).